Here is a 1207-residue protein sequence, read N- to C-terminus: MKAHKTVFNQHPLSLNKLFFVLLLIFFLPPASPAASVNGLYKDSQQLLSFKAALPPTPTLLQNWLSSTGPCSFTGVSCKNSRVSSIDLSNTFLSVDFSLVTSYLLPLSNLESLVLKNANLSGSLTSAAKSQCGVTLDSIDLAENTISGPISDISSFGVCSNLKSLNLSKNFLDPPGKEMLKAATFSLQVLDLSYNNISGFNLFPWVSSMGFVELEFFSLKGNKLAGSIPELDFKNLSYLDLSANNFSTVFPSFKDCSNLQHLDLSSNKFYGDIGSSLSSCGKLSFLNLTNNQFVGLVPKLPSESLQYLYLRGNDFQGVYPNQLADLCKTVVELDLSYNNFSGMVPESLGECSSLELVDISYNNFSGKLPVDTLSKLSNIKTMVLSFNKFVGGLPDSFSNLLKLETLDMSSNNLTGVIPSGICKDPMNNLKVLYLQNNLFKGPIPDSLSNCSQLVSLDLSFNYLTGSIPSSLGSLSKLKDLILWLNQLSGEIPQELMYLQALENLILDFNDLTGPIPASLSNCTKLNWISLSNNQLSGEIPASLGRLSNLAILKLGNNSISGNIPAELGNCQSLIWLDLNTNFLNGSIPPPLFKQSGNIAVALLTGKRYVYIKNDGSKECHGAGNLLEFGGIRQEQLDRISTRHPCNFTRVYRGITQPTFNHNGSMIFLDLSYNKLEGSIPKELGAMYYLSILNLGHNDLSGMIPQQLGGLKNVAILDLSYNRFNGTIPNSLTSLTLLGEIDLSNNNLSGMIPESAPFDTFPDYRFANNSLCGYPLPIPCSSGPKSDANQHQKSHRRQASLAGSVAMGLLFSLFCIFGLIIVAIETKKRRRKKEAALEAYMDGHSHSATANSAWKFTSAREALSINLAAFEKPLRKLTFADLLEATNGFHNDSLVGSGGFGDVYKAQLKDGSVVAIKKLIHVSGQGDREFTAEMETIGKIKHRNLVPLLGYCKVGEERLLVYEYMKYGSLEDVLHDRKKIGIKLNWPARRKIAIGAARGLAFLHHNCIPHIIHRDMKSSNVLLDENLEARVSDFGMARLMSAMDTHLSVSTLAGTPGYVPPEYYQSFRCSTKGDVYSYGVVLLELLTGKQPTDSADFGDNNLVGWVKLHAKGKITDVFDRELLKEDASIEIELLQHLKVACACLDDRHWKRPTMIQVMAMFKEIQAGSGMDSTSTIGADDVNFSGVEGGIEMGINGSIKEGNELSKHL.

Positions methionine 1–alanine 34 are cleaved as a signal peptide. The short motif at cysteine 71–cysteine 78 is the Cys pair 1 element. 20 LRR repeats span residues asparagine 109–glutamine 131, threonine 135–glycine 157, asparagine 161–lysine 181, serine 186–serine 207, glutamate 213–lysine 234, asparagine 235–serine 257, asparagine 258–cysteine 280, lysine 282–serine 304, leucine 305–aspartate 325, threonine 329–glutamate 350, serine 353–serine 374, asparagine 378–leucine 400, lysine 402–lysine 423, asparagine 428–cysteine 450, glutamine 452–leucine 474, lysine 476–glutamine 499, alanine 500–threonine 523, lysine 524–serine 547, asparagine 548–cysteine 570, and serine 572–glutamine 594. An N-linked (GlcNAc...) asparagine glycan is attached at asparagine 119. 2 N-linked (GlcNAc...) asparagine glycosylation sites follow: asparagine 166 and asparagine 196. 2 N-linked (GlcNAc...) asparagine glycosylation sites follow: asparagine 235 and asparagine 245. An N-linked (GlcNAc...) asparagine glycan is attached at asparagine 287. N-linked (GlcNAc...) asparagine glycans are attached at residues asparagine 339 and asparagine 363. Asparagine 412 and asparagine 449 each carry an N-linked (GlcNAc...) asparagine glycan. N-linked (GlcNAc...) asparagine glycosylation occurs at asparagine 521. Asparagine 556, asparagine 584, asparagine 646, and asparagine 662 each carry an N-linked (GlcNAc...) asparagine glycan. LRR repeat units follow at residues serine 664–methionine 686, tyrosine 688–lysine 711, asparagine 712–threonine 735, and leucine 736–aspartate 758. N-linked (GlcNAc...) asparagine glycans are attached at residues asparagine 724, asparagine 746, and asparagine 767. The short motif at cysteine 771 to cysteine 779 is the Cys pair 2 element. Residues serine 803 to isoleucine 823 traverse the membrane as a helical segment. The region spanning phenylalanine 888–isoleucine 1163 is the Protein kinase domain. Residues valine 894–valine 902 and lysine 916 contribute to the ATP site. Aspartate 1014 functions as the Proton acceptor in the catalytic mechanism.

It belongs to the protein kinase superfamily. Ser/Thr protein kinase family.

The protein resides in the cell membrane. The enzyme catalyses L-seryl-[protein] + ATP = O-phospho-L-seryl-[protein] + ADP + H(+). The catalysed reaction is L-threonyl-[protein] + ATP = O-phospho-L-threonyl-[protein] + ADP + H(+). Receptor with a serine/threonine-protein kinase activity. Regulates, in response to brassinosteroid binding, a signaling cascade involved in plant development, including expression of light- and stress-regulated genes, promotion of cell elongation, normal leaf and chloroplast senescence, and flowering. May be involved in a feedback regulation of brassinosteroid biosynthesis. May be also involved in the perception of systemin, a peptide hormone responsible for the systemic activation of defense genes in leaves of wounded plants. The chain is Brassinosteroid LRR receptor kinase (CURL3) from Solanum lycopersicum (Tomato).